A 650-amino-acid chain; its full sequence is Threonine--tRNA ligase (650 aa).

The TGS domain maps to 5-67 (NKSMFIKLKD…QEGDQVILWG (63 aa)). A catalytic region spans residues 246–537 (DHKLLGAKLD…LIEHYVGKFP (292 aa)). Residues C337, H388, and H514 each coordinate Zn(2+).

It belongs to the class-II aminoacyl-tRNA synthetase family. In terms of assembly, homodimer. Zn(2+) serves as cofactor.

It localises to the cytoplasm. It catalyses the reaction tRNA(Thr) + L-threonine + ATP = L-threonyl-tRNA(Thr) + AMP + diphosphate + H(+). In terms of biological role, catalyzes the attachment of threonine to tRNA(Thr) in a two-step reaction: L-threonine is first activated by ATP to form Thr-AMP and then transferred to the acceptor end of tRNA(Thr). Also edits incorrectly charged L-seryl-tRNA(Thr). In Protochlamydia amoebophila (strain UWE25), this protein is Threonine--tRNA ligase.